Here is a 541-residue protein sequence, read N- to C-terminus: Membrane protein insertase YidC (541 aa).

5 consecutive transmembrane segments (helical) span residues 7 to 27, 345 to 365, 415 to 435, 453 to 473, and 492 to 512; these read LLFM…QVDY, LVQN…AILY, LGGC…YWTF, LSAQ…MFLL, and FMPL…VLYW.

Belongs to the OXA1/ALB3/YidC family. Type 1 subfamily. In terms of assembly, interacts with the Sec translocase complex via SecD. Specifically interacts with transmembrane segments of nascent integral membrane proteins during membrane integration.

Its subcellular location is the cell inner membrane. Its function is as follows. Required for the insertion and/or proper folding and/or complex formation of integral membrane proteins into the membrane. Involved in integration of membrane proteins that insert both dependently and independently of the Sec translocase complex, as well as at least some lipoproteins. Aids folding of multispanning membrane proteins. This is Membrane protein insertase YidC from Histophilus somni (strain 129Pt) (Haemophilus somnus).